Reading from the N-terminus, the 544-residue chain is Bacillolysin (544 aa).

The first 25 residues, 1–25 (MNKRAMLGAIGLAFGLMAWPFGASA), serve as a signal peptide directing secretion. Positions 26 to 225 (KGKSMVWNEQ…DEAKPGGAQP (200 aa)) are cleaved as a propeptide — activation peptide. Ca(2+) contacts are provided by aspartate 285, aspartate 287, glutamine 289, and aspartate 366. Histidine 370 is a Zn(2+) binding site. Residue glutamate 371 is part of the active site. Zn(2+) is bound by residues histidine 374 and glutamate 394. Ca(2+) contacts are provided by glutamate 405, asparagine 411, aspartate 413, glutamate 415, glutamate 418, tyrosine 421, threonine 422, valine 425, and aspartate 428. The active-site Proton donor is histidine 459.

Belongs to the peptidase M4 family. It depends on Ca(2+) as a cofactor. Zn(2+) serves as cofactor.

It is found in the secreted. It carries out the reaction Similar, but not identical, to that of thermolysin.. Its function is as follows. Extracellular zinc metalloprotease. The polypeptide is Bacillolysin (npr) (Bacillus caldolyticus).